The following is a 141-amino-acid chain: Large ribosomal subunit protein uL11 (141 aa).

Belongs to the universal ribosomal protein uL11 family. Part of the ribosomal stalk of the 50S ribosomal subunit. Interacts with L10 and the large rRNA to form the base of the stalk. L10 forms an elongated spine to which L12 dimers bind in a sequential fashion forming a multimeric L10(L12)X complex. One or more lysine residues are methylated.

In terms of biological role, forms part of the ribosomal stalk which helps the ribosome interact with GTP-bound translation factors. This Lactiplantibacillus plantarum (strain ATCC BAA-793 / NCIMB 8826 / WCFS1) (Lactobacillus plantarum) protein is Large ribosomal subunit protein uL11.